The primary structure comprises 367 residues: CCN family member 4 (367 aa).

The first 22 residues, 1–22, serve as a signal peptide directing secretion; the sequence is MRWLLPWTLAAVAVLMVGNILA. The IGFBP N-terminal domain maps to 45-118; sequence RPEFCKWPCE…RYAIGVCAQV (74 aa). 4 disulfides stabilise this stretch: Cys-49/Cys-73, Cys-53/Cys-75, Cys-55/Cys-76, and Cys-62/Cys-79. Asn-86 is a glycosylation site (N-linked (GlcNAc...) asparagine). 2 disulfides stabilise this stretch: Cys-87–Cys-101 and Cys-93–Cys-115. Positions 121 to 186 constitute a VWFC domain; it reads VGCVLDGVRY…GQCCEQWVCD (66 aa). Residue Asn-143 is glycosylated (N-linked (GlcNAc...) asparagine). Residues 215–260 form the TSP type-1 domain; the sequence is NCIAYTSPWSPCSTTCGLGISTRISNVNARCWPEQESRLCNLRPCD. 5 disulfide bridges follow: Cys-273–Cys-310, Cys-290–Cys-324, Cys-301–Cys-340, Cys-304–Cys-342, and Cys-309–Cys-346. Positions 273 to 347 constitute a CTCK domain; sequence CLAVYQPEEA…NACFCNLSCR (75 aa). A glycan (N-linked (GlcNAc...) asparagine) is linked at Asn-284. Asn-343 is a glycosylation site (N-linked (GlcNAc...) asparagine).

It belongs to the CCN family.

It is found in the secreted. Downstream regulator in the Wnt/Frizzled-signaling pathway. Associated with cell survival. Adheres to skin and melanoma fibroblasts. In vitro binding to skin fibroblasts occurs through the proteoglycans, decorin and biglycan. This Rattus norvegicus (Rat) protein is CCN family member 4 (Ccn4).